The primary structure comprises 229 residues: Putative N-acetylmannosamine-6-phosphate 2-epimerase (229 aa).

It belongs to the NanE family.

It catalyses the reaction an N-acyl-D-glucosamine 6-phosphate = an N-acyl-D-mannosamine 6-phosphate. It participates in amino-sugar metabolism; N-acetylneuraminate degradation; D-fructose 6-phosphate from N-acetylneuraminate: step 3/5. Its function is as follows. Converts N-acetylmannosamine-6-phosphate (ManNAc-6-P) to N-acetylglucosamine-6-phosphate (GlcNAc-6-P). This Salmonella agona (strain SL483) protein is Putative N-acetylmannosamine-6-phosphate 2-epimerase.